A 486-amino-acid chain; its full sequence is Malonate-semialdehyde dehydrogenase (486 aa).

Positions 154, 178, 181, 182, and 231 each coordinate NAD(+). Cys286 (nucleophile) is an active-site residue. Residue Glu386 participates in NAD(+) binding.

This sequence belongs to the aldehyde dehydrogenase family. IolA subfamily. As to quaternary structure, homotetramer.

The catalysed reaction is 3-oxopropanoate + NAD(+) + CoA + H2O = hydrogencarbonate + acetyl-CoA + NADH + H(+). The enzyme catalyses 2-methyl-3-oxopropanoate + NAD(+) + CoA + H2O = propanoyl-CoA + hydrogencarbonate + NADH + H(+). The protein operates within polyol metabolism; myo-inositol degradation into acetyl-CoA; acetyl-CoA from myo-inositol: step 7/7. Its function is as follows. Catalyzes the oxidation of malonate semialdehyde (MSA) and methylmalonate semialdehyde (MMSA) into acetyl-CoA and propanoyl-CoA, respectively. Is involved in a myo-inositol catabolic pathway. Bicarbonate, and not CO2, is the end-product of the enzymatic reaction. This is Malonate-semialdehyde dehydrogenase from Bacillus cereus (strain ATCC 10987 / NRS 248).